Reading from the N-terminus, the 199-residue chain is Interleukin-11 (199 aa).

Positions 1–21 (MNCVCRLVLVVLSLWPDTAVA) are cleaved as a signal peptide. An important for interaction with IL11RA and for the stimulation of cell proliferation region spans residues 182–190 (HLTLDWAVR).

The protein belongs to the IL-6 superfamily. Interacts with IL11RA to associate with IL6ST, giving rise to a multimeric signaling complex.

The protein resides in the secreted. Cytokine that stimulates the proliferation of hematopoietic stem cells and megakaryocyte progenitor cells and induces megakaryocyte maturation resulting in increased platelet production. Also promotes the proliferation of hepatocytes in response to liver damage. Binding to its receptor formed by IL6ST and IL11RA activates a signaling cascade that promotes cell proliferation. Signaling leads to the activation of intracellular protein kinases and the phosphorylation of STAT3. The interaction with the membrane-bound IL11RA and IL6ST stimulates 'classic signaling', whereas the binding of IL11 and soluble IL11RA to IL6ST stimulates 'trans-signaling'. This chain is Interleukin-11, found in Homo sapiens (Human).